The sequence spans 172 residues: MSSKFGNQCGKTQKIYIRNELINPDIEFSVPNSIFSCIGPKYAYASLQSIVVKYTPVITERSTGSIGISVSDRRFSASEVVSNISLDTSSKANLMISGFSCCPLEEGCPYTITISTKLEGVNYGAAVGSLVVSPSFRLSNEPIPTTGITYQMIKLGDVQKTYQGVAITDEKK.

This is Protein 3 (3) from Northern cereal mosaic virus (NCMV).